Here is a 476-residue protein sequence, read N- to C-terminus: Bifunctional protein HldE (476 aa).

The segment at 1–318 (MKPILPDYSQ…AEAIHGSQDT (318 aa)) is ribokinase. Residue 195-198 (NMAE) coordinates ATP. The active site involves Asp-264. Positions 344–476 (MTNGCFDILH…IIKAIKGGRG (133 aa)) are cytidylyltransferase.

This sequence in the N-terminal section; belongs to the carbohydrate kinase PfkB family. The protein in the C-terminal section; belongs to the cytidylyltransferase family. Homodimer.

The enzyme catalyses D-glycero-beta-D-manno-heptose 7-phosphate + ATP = D-glycero-beta-D-manno-heptose 1,7-bisphosphate + ADP + H(+). The catalysed reaction is D-glycero-beta-D-manno-heptose 1-phosphate + ATP + H(+) = ADP-D-glycero-beta-D-manno-heptose + diphosphate. It participates in nucleotide-sugar biosynthesis; ADP-L-glycero-beta-D-manno-heptose biosynthesis; ADP-L-glycero-beta-D-manno-heptose from D-glycero-beta-D-manno-heptose 7-phosphate: step 1/4. It functions in the pathway nucleotide-sugar biosynthesis; ADP-L-glycero-beta-D-manno-heptose biosynthesis; ADP-L-glycero-beta-D-manno-heptose from D-glycero-beta-D-manno-heptose 7-phosphate: step 3/4. Catalyzes the phosphorylation of D-glycero-D-manno-heptose 7-phosphate at the C-1 position to selectively form D-glycero-beta-D-manno-heptose-1,7-bisphosphate. Functionally, catalyzes the ADP transfer from ATP to D-glycero-beta-D-manno-heptose 1-phosphate, yielding ADP-D-glycero-beta-D-manno-heptose. In Vibrio atlanticus (strain LGP32) (Vibrio splendidus (strain Mel32)), this protein is Bifunctional protein HldE.